The primary structure comprises 115 residues: NADH-ubiquinone oxidoreductase chain 3 (115 aa).

M1 carries the N-formylmethionine modification. Transmembrane regions (helical) follow at residues 3 to 23 (LMLALLTNFTLATLLVIIAFW), 55 to 75 (FFLVAITFLLFDLEIALLLPL), and 84 to 104 (LNTMLTMALFLIILLAVSLAY).

Core subunit of respiratory chain NADH dehydrogenase (Complex I) which is composed of 45 different subunits. Interacts with TMEM186. Interacts with TMEM242.

It is found in the mitochondrion inner membrane. The enzyme catalyses a ubiquinone + NADH + 5 H(+)(in) = a ubiquinol + NAD(+) + 4 H(+)(out). Its function is as follows. Core subunit of the mitochondrial membrane respiratory chain NADH dehydrogenase (Complex I) which catalyzes electron transfer from NADH through the respiratory chain, using ubiquinone as an electron acceptor. Essential for the catalytic activity of complex I. The polypeptide is NADH-ubiquinone oxidoreductase chain 3 (Bos taurus (Bovine)).